Consider the following 88-residue polypeptide: UPF0335 protein WD_0557 (88 aa).

It belongs to the UPF0335 family.

The polypeptide is UPF0335 protein WD_0557 (Wolbachia pipientis wMel).